The following is a 1505-amino-acid chain: Probable serine/threonine-protein kinase irlD (1505 aa).

A compositionally biased stretch (basic residues) spans 1-18 (MGPKKGKRSHSKNHHHHN). Disordered regions lie at residues 1-30 (MGPKKGKRSHSKNHHHHNNGNNNNNNNSGG), 121-211 (IPQP…NNIL), 548-571 (TTTTTTTTTTTTTTIDKDEKDKEN), and 862-1013 (EENE…TIAT). The span at 139–158 (SISTTTTTTTATAIEIESSS) shows a compositional bias: low complexity. Positions 159 to 172 (GLTSNITDSTEIQL) are enriched in polar residues. 2 stretches are compositionally biased toward low complexity: residues 173–209 (DSTTTDTKTTSTTSTTTNNSSDSNNNNNNNNNNNSNN) and 548–561 (TTTTTTTTTTTTTT). Composition is skewed to basic and acidic residues over residues 562–571 (IDKDEKDKEN) and 862–882 (EENEKKRLKEKRKKEEKEKKK). A coiled-coil region spans residues 846-892 (IRTEESLKAEKDLLEQEENEKKRLKEKRKKEEKEKKKQQNLKQKSLI). Residues 896 to 924 (TTTTTTTTPIPITVPIPTQTQTPTQTPTQ) show a composition bias toward low complexity. A compositionally biased stretch (pro residues) spans 925-943 (TPIPTPIPTTPIPTTPIPI). Low complexity-rich tracts occupy residues 944–954 (PIQLTPTTPKT) and 960–977 (TPKTPTTPKTPITPKTPK). Over residues 978 to 989 (NSTLDKQTISTP) the composition is skewed to polar residues. Residues 1054 to 1324 (RKDEFIIGRG…TENILLHPFF (271 aa)) enclose the Protein kinase domain. ATP contacts are provided by residues 1060-1068 (IGRGSNGTL) and Lys1083. The active-site Proton acceptor is Asp1194. One can recognise a KEN domain in the interval 1327-1505 (HEKKVKFIDA…LIYFNDLIIK (179 aa)).

This sequence belongs to the protein kinase superfamily. Ser/Thr protein kinase family.

The enzyme catalyses L-seryl-[protein] + ATP = O-phospho-L-seryl-[protein] + ADP + H(+). It catalyses the reaction L-threonyl-[protein] + ATP = O-phospho-L-threonyl-[protein] + ADP + H(+). The sequence is that of Probable serine/threonine-protein kinase irlD (irlD) from Dictyostelium discoideum (Social amoeba).